We begin with the raw amino-acid sequence, 465 residues long: Lysophospholipid acyltransferase 2 (465 aa).

The next 9 membrane-spanning stretches (helical) occupy residues 15 to 35, 55 to 75, 86 to 106, 161 to 181, 214 to 234, 266 to 286, 356 to 376, 399 to 419, and 434 to 454; these read VSVA…ISFL, FLSY…PMTI, LSGF…HVFY, SLIE…GPVF, AVFQ…QFPL, YFIW…FSGW, AVWH…ALMI, VLVL…SVGF, and VYYI…LVPV. The active site involves His-359.

It belongs to the membrane-bound acyltransferase family. Interacts with GPAT9 and DGAT1. In terms of tissue distribution, expressed in rosette leaves, pollen grains, developing embryos and developing seeds.

The protein resides in the endoplasmic reticulum membrane. The enzyme catalyses a 1-acyl-sn-glycero-3-phosphocholine + an acyl-CoA = a 1,2-diacyl-sn-glycero-3-phosphocholine + CoA. It catalyses the reaction 1-(9Z-octadecenoyl)-sn-glycero-3-phosphocholine + (9Z)-octadecenoyl-CoA = 1,2-di-(9Z-octadecenoyl)-sn-glycero-3-phosphocholine + CoA. The catalysed reaction is 1-(9Z-octadecenoyl)-sn-glycero-3-phosphocholine + (9Z,12Z)-octadecadienoyl-CoA = 1-(9Z)-octadecenoyl-2-(9Z,12Z)-octadecadienoyl-sn-glycero-3-phosphocholine + CoA. It carries out the reaction (9Z,12Z,15Z)-octadecatrienoyl-CoA + 1-(9Z-octadecenoyl)-sn-glycero-3-phosphocholine = 1-(9Z-octadecaenoyl)-2-(9Z,12Z,15Z-octadecatrienoyl)-sn-glycero-3-phosphocholine + CoA. The enzyme catalyses a 1-acyl-sn-glycero-3-phosphoethanolamine + an acyl-CoA = a 1,2-diacyl-sn-glycero-3-phosphoethanolamine + CoA. It catalyses the reaction a 1-acyl-sn-glycero-3-phospho-L-serine + an acyl-CoA = a 1,2-diacyl-sn-glycero-3-phospho-L-serine + CoA. Its function is as follows. Lysophospholipid acyltransferase with broad specificity. Mediates the conversion of lysophosphatidylethanolamine (1-acyl-sn-glycero-3-phosphoethanolamine or LPE) into phosphatidylethanolamine (1,2-diacyl-sn-glycero-3-phosphoethanolamine or PE) (LPEAT activity). Catalyzes the acylation of lysophosphatidylserine (1-acyl-2-hydroxy-sn-glycero-3-phospho-L-serine or LPS) into phosphatidylserine (1,2-diacyl-sn-glycero-3-phospho-L-serine or PS) (LPSAT activity). Can convert lysophosphatidylcholine (1-acyl-sn-glycero-3-phosphocholine or LPC) into phosphatidylcholine (1,2-diacyl-sn-glycero-3-phosphocholine or PC) (LPCAT activity). Exhibits preference for C18-unsaturated acyl-CoA when transferring an acyl group to lysophosphatidylcholine. Can also utilize lysophosphatidylglycerol (LPG) as substrate in vitro. Has neither activity towards lysophosphatidic acid (LPA) nor lysophosphatidylinositol (LPI). Lysophospholipid acyltransferases catalyze the reacylation step of the phospholipid remodeling pathway also known as the Lands cycle. The primary function of the Lands cycle is to provide a route for acyl remodeling to modify fatty acid (FA) composition of phospholipids derived from the Kennedy pathway. Is involved in PC acyl editing and phosphocholine headgroup exchange between PC and diacylglycerols. This processes control the majority of acyl fluxes through PC to provide polyunsaturated fatty acids for triacylglycerols synthesis in seeds. Involved with LPCAT1 in the direct incorporation of newly synthesized fatty acids exported form the chloroplast into PC through acyl editing. The polypeptide is Lysophospholipid acyltransferase 2 (Arabidopsis thaliana (Mouse-ear cress)).